The primary structure comprises 578 residues: MEVKGEIYRVSGPVVTVTGLQAKMYDLVKVGDEGLMGEVIQILGPKTIIQVYEETAGIKPGEPCYSTGSSLSVELGPGLLSSIYDGVQRPLHVLLERTGGFIGRGVTADGLDHKKLWEFKPVAKKGDSVKGGDVIGVVQETVNIEHKIMVPPDISGTISDIKSGNFTVVDTICTLTDGTELQMMQKWPVRRPRPVRTKLTPTRPLVTGMRILDGLFPVAKGGTAAIPGPFGSGKTVTQQSLAKWSDTEIVVYIGCGERGNEMADVLSEFPELEDPQTGRPLMERTVLIANTSNMPVAAREASVYTGITIAEYFRDMGLDVSLMADSTSRWAEAMREISSRLEEMPGEEGYPAYLSARLAEFYERAGVAESLCGETGSITVIGAVSPPGGDFSEPVTQNTLRIVKVFWALDAKLSQRRHFPAINWLNSYSLYKDSLNDWFADNVAPDYVPLRERAMEMLQTESELQEIVQLVGSDALPDDQQLLLEITRMLREIFLQQNAFHPVDAYSPFAQQYRILKAIMKWGDAAMEALKSGVPVPEILKLESKNVLAKVKYEEKFDESMNAVLTQMDKEFASLRGR.

228 to 235 (GPFGSGKT) contributes to the ATP binding site.

The protein belongs to the ATPase alpha/beta chains family. As to quaternary structure, has multiple subunits with at least A(3), B(3), C, D, E, F, H, I and proteolipid K(x).

The protein resides in the cell membrane. The enzyme catalyses ATP + H2O + 4 H(+)(in) = ADP + phosphate + 5 H(+)(out). Functionally, component of the A-type ATP synthase that produces ATP from ADP in the presence of a proton gradient across the membrane. The A chain is the catalytic subunit. The polypeptide is A-type ATP synthase subunit A (Methanosarcina barkeri (strain Fusaro / DSM 804)).